Reading from the N-terminus, the 347-residue chain is S-adenosylmethionine:tRNA ribosyltransferase-isomerase (347 aa).

This sequence belongs to the QueA family. Monomer.

It localises to the cytoplasm. The catalysed reaction is 7-aminomethyl-7-carbaguanosine(34) in tRNA + S-adenosyl-L-methionine = epoxyqueuosine(34) in tRNA + adenine + L-methionine + 2 H(+). It participates in tRNA modification; tRNA-queuosine biosynthesis. Its function is as follows. Transfers and isomerizes the ribose moiety from AdoMet to the 7-aminomethyl group of 7-deazaguanine (preQ1-tRNA) to give epoxyqueuosine (oQ-tRNA). In Pseudomonas aeruginosa (strain ATCC 15692 / DSM 22644 / CIP 104116 / JCM 14847 / LMG 12228 / 1C / PRS 101 / PAO1), this protein is S-adenosylmethionine:tRNA ribosyltransferase-isomerase.